We begin with the raw amino-acid sequence, 182 residues long: ATP synthase subunit delta (182 aa).

The protein belongs to the ATPase delta chain family. F-type ATPases have 2 components, F(1) - the catalytic core - and F(0) - the membrane proton channel. F(1) has five subunits: alpha(3), beta(3), gamma(1), delta(1), epsilon(1). CF(0) has four main subunits: a(1), b(1), b'(1) and c(10-14). The alpha and beta chains form an alternating ring which encloses part of the gamma chain. F(1) is attached to F(0) by a central stalk formed by the gamma and epsilon chains, while a peripheral stalk is formed by the delta, b and b' chains.

The protein localises to the cellular thylakoid membrane. Its function is as follows. F(1)F(0) ATP synthase produces ATP from ADP in the presence of a proton or sodium gradient. F-type ATPases consist of two structural domains, F(1) containing the extramembraneous catalytic core and F(0) containing the membrane proton channel, linked together by a central stalk and a peripheral stalk. During catalysis, ATP synthesis in the catalytic domain of F(1) is coupled via a rotary mechanism of the central stalk subunits to proton translocation. In terms of biological role, this protein is part of the stalk that links CF(0) to CF(1). It either transmits conformational changes from CF(0) to CF(1) or is implicated in proton conduction. The protein is ATP synthase subunit delta of Synechococcus sp. (strain JA-2-3B'a(2-13)) (Cyanobacteria bacterium Yellowstone B-Prime).